Here is a 962-residue protein sequence, read N- to C-terminus: Spliceosome associated factor 3, U4/U6 recycling protein (962 aa).

Residues 1-21 (MATTAASSASEPEVEPQAGPE) show a composition bias toward low complexity. The segment at 1 to 92 (MATTAASSAS…EDEWEYDEEE (92 aa)) is disordered. An N-acetylalanine modification is found at A2. The interval 2–352 (ATTAASSASE…LVPDLWIRYS (351 aa)) is mediates interaction with PRPF3. A Phosphoserine modification is found at S10. Positions 81-92 (AGEDEWEYDEEE) are enriched in acidic residues. HAT repeat units lie at residues 127 to 159 (GELS…DEIS), 165 to 196 (LDRE…YSVG), 202 to 238 (GGLE…FESA), 243 to 276 (ARLE…WSEE), 325 to 357 (GDPA…YLDR), 360 to 392 (KVKD…AMER), 395 to 431 (LDHQ…YLRR), 441 to 474 (KELE…PSCL), and 488 to 521 (NNMQ…LERA). A Phosphoserine modification is found at S216. A required for interaction with USP4 region spans residues 488 to 521 (NNMQKARELWDSIMTRGNAKYANMWLEYYNLERA). Residues 538 to 952 (CTSDYPEHVC…VATEAPKMSN (415 aa)) are necessary and sufficient for U6 snRNA binding. A coiled-coil region spans residues 559 to 618 (TLEDWDLAIQKTETRLARVNEQRMKAAEKEAALVQQEEEKAEQRKKVRAEKKALKKKKKT). Residues 591-602 (LVQQEEEKAEQR) show a composition bias toward basic and acidic residues. Residues 591–696 (LVQQEEEKAE…SLKRDMPKVA (106 aa)) form a disordered region. The segment at 601-670 (QRKKVRAEKK…KEETELSGKC (70 aa)) is required for nuclear localization. Positions 602-609 (RKKVRAEK) match the Nuclear localization signal motif. The segment covering 603-618 (KKVRAEKKALKKKKKT) has biased composition (basic residues). Residues 627 to 640 (DEDEENEWGEEEEE) are compositionally biased toward acidic residues. The residue at position 651 (S651) is a Phosphoserine. A compositionally biased stretch (basic and acidic residues) spans 680 to 696 (KQKEKAASLKRDMPKVA). Residues 704–782 (VTVFVSNLPY…RPMFVSPCVD (79 aa)) enclose the RRM 1 domain. Phosphoserine is present on residues S795 and S852. Residues 801 to 878 (HKLFISGLPF…NVIKVAISNP (78 aa)) enclose the RRM 2 domain. The interval 880 to 962 (QRKVPEKPEV…ADFAKLLLRK (83 aa)) is disordered. The residue at position 906 (R906) is an Omega-N-methylarginine.

In terms of assembly, component of the 7SK snRNP complex at least composed of P-TEFb (composed of CDK9 and CCNT1/cyclin-T1), HEXIM1, HEXIM2, BCDIN3, SART3 proteins and 7SK and U6 snRNAs. Interacts with AGO1 and AGO2. Interacts with PRPF3 and USP4; the interaction with PRPF3 is direct and recruits USP4 to its substrate PRPF3. Interacts with USP15; the interaction is direct. As to expression, ubiquitously expressed, with low level of expression in liver, heart and skeletal. Also detected in hematopoietic cells (at protein level).

The protein resides in the nucleus. It localises to the nucleoplasm. The protein localises to the cajal body. It is found in the nucleus speckle. Its subcellular location is the cytoplasm. In terms of biological role, U6 snRNP-binding protein that functions as a recycling factor of the splicing machinery. Promotes the initial reassembly of U4 and U6 snRNPs following their ejection from the spliceosome during its maturation. Also binds U6atac snRNPs and may function as a recycling factor for U4atac/U6atac spliceosomal snRNP, an initial step in the assembly of U12-type spliceosomal complex. The U12-type spliceosomal complex plays a role in the splicing of introns with non-canonical splice sites. May also function as a substrate-targeting factor for deubiquitinases like USP4 and USP15. Recruits USP4 to ubiquitinated PRPF3 within the U4/U5/U6 tri-snRNP complex, promoting PRPF3 deubiquitination and thereby regulating the spliceosome U4/U5/U6 tri-snRNP spliceosomal complex disassembly. May also recruit the deubiquitinase USP15 to histone H2B and mediate histone deubiquitination, thereby regulating gene expression and/or DNA repair. May play a role in hematopoiesis probably through transcription regulation of specific genes including MYC. In Mus musculus (Mouse), this protein is Spliceosome associated factor 3, U4/U6 recycling protein.